Reading from the N-terminus, the 185-residue chain is MIKFNIRGENVEVTDAIRAYVEDKIGKLDKYFNDGHEVTAYVNLKVYTEKRAKVEVTLPAKNVTLRAEDTSQDMYSSIDFVEEKLERQIRKYKTRMNRKPRNAVPTGQVFGDEFAPLDTTDEVAEDHVDIVRTKHVALKPMDAEEAVLQMDMLGHDFYVFTDADSNGTHVVYRRTDGRYGLIETE.

The interval M1–E125 is probably still associates with ribosome. Residues D126–E185 are required but not sufficient to restore ribosome dimerization, in vitro will replace E.coli RMF in ribosome dimerization.

Belongs to the HPF/YfiA ribosome-associated protein family. Long HPF subfamily. In terms of assembly, interacts with 100S ribosomes in stationary phase; alters the relative position of the 30S and 50S subunits.

It is found in the cytoplasm. Its function is as follows. Required for dimerization of active 70S ribosomes into 100S ribosomes in stationary phase; 100S ribosomes are translationally inactive and sometimes present during exponential growth. Able to dimerize E.coli 70S ribosomes in vitro. The polypeptide is Ribosome hibernation promotion factor (Lactococcus lactis subsp. cremoris (strain MG1363)).